The sequence spans 669 residues: Epithelial sodium channel subunit alpha (669 aa).

The disordered stretch occupies residues 1 to 43 (MEGNKLEEQDSSPPQSTPGLMKGNKREEQGLGPEPAAPQQPTA). Residues 1–85 (MEGNKLEEQD…CSQHNRMKTA (85 aa)) lie on the Cytoplasmic side of the membrane. Residues 33–42 (PEPAAPQQPT) are compositionally biased toward low complexity. The helical transmembrane segment at 86–106 (FWAVLWLCTFGMMYWQFGLLF) threads the bilayer. Residues 107 to 562 (GEYFSYPVSL…SQWSLWFGSS (456 aa)) are Extracellular-facing. 10 cysteine pairs are disulfide-bonded: cysteine 133–cysteine 305, cysteine 229–cysteine 236, cysteine 282–cysteine 289, cysteine 394–cysteine 479, cysteine 416–cysteine 456, cysteine 416–cysteine 475, cysteine 420–cysteine 471, cysteine 429–cysteine 456, cysteine 429–cysteine 479, and cysteine 431–cysteine 445. The gating release of inhibition by proteolysis (GRIP); protease-sensitive region that is responsible for the proteolytic activation of the channel stretch occupies residues 175–243 (RSRRDLRGTL…SDCFYQTYSS (69 aa)). Residues 563 to 583 (VLSVVEMAELVFDLLVIMFLM) form a helical membrane-spanning segment. Residues 584–669 (LLRRFRSRYW…SSSTCPLGGP (86 aa)) lie on the Cytoplasmic side of the membrane. Residues 620–669 (HPMSLSLSQPGPAPSPALTAPPPAYATLGPRPSPGGSAGASSSTCPLGGP) form a disordered region. Residues 630–643 (GPAPSPALTAPPPA) are compositionally biased toward pro residues. A PY motif; recruits WW domain-containing proteins and is thereby required for ubiquitination and inhibition of the channel by NEDD4 and NEDD4L motif is present at residues 640 to 644 (PPPAY).

This sequence belongs to the amiloride-sensitive sodium channel (TC 1.A.6) family. SCNN1A subfamily. In terms of assembly, heterotrimer; containing an alpha/SCNN1A, a beta/SCNN1B and a gamma/SCNN1G subunit. Interacts with WWP1 (via WW domains). Interacts with WWP2 (via WW domains); inhibits the channel. Interacts with BPIFA1; the interaction is indirect via SCNN1B and inhibits the proteolytic processing of SCNN1A and SCNN1G and the activation of ENaC. Interacts with the full-length immature form of PCSK9 (pro-PCSK9); inhibits ENaC by promoting its proteasomal degradation. In terms of processing, ubiquitinated. Can be ubiquitinated at multiple sites and undergo monoubiquitination and polyubiquitination. Ubiquitination by NEDD4 or NEDD4L inhibits the ENaC channel through endocytosis, intracellular retention and degradation of its individual subunits. ENaC is activated through the proteolytic maturation of its subunits. Furin cleaves the SCNN1A subunit, which results in a stepwise increase in the open probability of the channel due to the release of an inhibitory tract. BPIFA1, which is recruited by the SCNN1B subunit, prevents the proteolytic activation of ENaC. Post-translationally, N-glycosylated. Expressed in the female reproductive tract, from the fimbrial end of the fallopian tube to the endometrium (at protein level). Expressed in kidney (at protein level). In the respiratory tract, expressed in the bronchial epithelium (at protein level). Highly expressed in lung. Detected at intermediate levels in pancreas and liver, and at low levels in heart and placenta. in skin, expressed in keratinocytes, melanocytes and Merkel cells of the epidermal sub-layers, stratum basale, stratum spinosum and stratum granulosum (at protein level). Expressed in the outer root sheath of the hair follicles (at protein level). Detected in both peripheral and central cells of the sebaceous gland (at protein level). Expressed by eccrine sweat glands (at protein level). In skin, also expressed by arrector pili muscle cells and intradermal adipocytes. Isoform 1 and isoform 2 predominate in all tissues. As to expression, detected in lung and heart.

It localises to the apical cell membrane. The protein resides in the cell projection. It is found in the cilium. Its subcellular location is the cytoplasmic granule. The protein localises to the cytoplasm. It localises to the cytoplasmic vesicle. The protein resides in the secretory vesicle. It is found in the acrosome. Its subcellular location is the flagellum. It catalyses the reaction Na(+)(in) = Na(+)(out). Its activity is regulated as follows. Originally identified and characterized by its inhibition by the diuretic drug amiloride. Inhibited by phenamil. Its function is as follows. This is one of the three pore-forming subunits of the heterotrimeric epithelial sodium channel (ENaC), a critical regulator of sodium balance and fluid homeostasis. ENaC operates in epithelial tissues, where it mediates the electrodiffusion of sodium ions from extracellular fluid through the apical membrane of cells, with water following osmotically. It plays a key role in maintaining sodium homeostasis through electrogenic sodium reabsorption in the kidneys. Additionally, ENaC is essential for airway surface liquid homeostasis, which is crucial for proper mucus clearance. Not functional. This chain is Epithelial sodium channel subunit alpha, found in Homo sapiens (Human).